The primary structure comprises 344 residues: Ferrochelatase (344 aa).

Fe cation-binding residues include histidine 196 and glutamate 277.

The protein belongs to the ferrochelatase family.

It is found in the cytoplasm. The catalysed reaction is heme b + 2 H(+) = protoporphyrin IX + Fe(2+). The protein operates within porphyrin-containing compound metabolism; protoheme biosynthesis; protoheme from protoporphyrin-IX: step 1/1. In terms of biological role, catalyzes the ferrous insertion into protoporphyrin IX. The polypeptide is Ferrochelatase (Synechococcus sp. (strain JA-2-3B'a(2-13)) (Cyanobacteria bacterium Yellowstone B-Prime)).